Consider the following 488-residue polypeptide: Photosystem II CP43 reaction center protein (488 aa).

Positions 1–29 (MTKVFALGWLLKINLMKTLYSLRRFYHVE) are excised as a propeptide. Helical transmembrane passes span 84–108 (LFEV…PHLA), 149–170 (LIGP…RDKN), 193–215 (KALF…RFVS), 270–290 (KPFA…LSYS), and 306–327 (WYNN…ASQA). Glu-382 contributes to the [CaMn4O5] cluster binding site. A helical membrane pass occupies residues 462–486 (RARAAAAGFEKGINRENEPVLSMRP).

Belongs to the PsbB/PsbC family. PsbC subfamily. In terms of assembly, PSII is composed of 1 copy each of membrane proteins PsbA, PsbB, PsbC, PsbD, PsbE, PsbF, PsbH, PsbI, PsbJ, PsbK, PsbL, PsbM, PsbT, PsbX, PsbY, PsbZ, Psb30/Ycf12, at least 3 peripheral proteins of the oxygen-evolving complex and a large number of cofactors. It forms dimeric complexes. Binds multiple chlorophylls and provides some of the ligands for the Ca-4Mn-5O cluster of the oxygen-evolving complex. It may also provide a ligand for a Cl- that is required for oxygen evolution. PSII binds additional chlorophylls, carotenoids and specific lipids. serves as cofactor.

It localises to the plastid. The protein localises to the chloroplast thylakoid membrane. One of the components of the core complex of photosystem II (PSII). It binds chlorophyll and helps catalyze the primary light-induced photochemical processes of PSII. PSII is a light-driven water:plastoquinone oxidoreductase, using light energy to abstract electrons from H(2)O, generating O(2) and a proton gradient subsequently used for ATP formation. In Pyropia yezoensis (Susabi-nori), this protein is Photosystem II CP43 reaction center protein.